Here is a 228-residue protein sequence, read N- to C-terminus: Prolactin-2A1 (228 aa).

Residues 1–29 (MQLSITHPCCWTLRLLLVSNLLLWENVAL) form the signal peptide. 2 disulfides stabilise this stretch: Cys87–Cys203 and Cys220–Cys228.

The protein belongs to the somatotropin/prolactin family. Expressed specifically in the placenta. Highly expressed in invasive trophoblast cells lining the central placental vessel.

The protein localises to the secreted. The polypeptide is Prolactin-2A1 (Prl2a1) (Rattus norvegicus (Rat)).